The sequence spans 360 residues: Transcriptional coactivator MYCFIDRAFT_190109 (360 aa).

Residues 3-67 (GMALNQLLAC…GFLHEPRPGQ (65 aa)) form the HTH iclR-type domain. Residues 33–52 (ARDVADLTGVPETQLCRVVR) constitute a DNA-binding region (H-T-H motif).

It is found in the nucleus. Transcriptional coactivator; part of the gene cluster that mediates the biosynthesis of an emodin derivative that may be involved in black Sigatoka disease of banana. With MYCFIDRAFT_198930, coregulates the production of the PKS8-1 cluster product. In Pseudocercospora fijiensis (strain CIRAD86) (Black leaf streak disease fungus), this protein is Transcriptional coactivator MYCFIDRAFT_190109.